A 380-amino-acid chain; its full sequence is Heme A synthase (380 aa).

8 helical membrane passes run 36 to 56 (IRAW…VGGL), 125 to 145 (VIGL…KIPA), 151 to 171 (LILP…MVAS), 187 to 207 (LATH…SILQ), 227 to 247 (FGLA…GALV), 287 to 307 (LVQF…VMVW), 320 to 340 (FAFN…IVTV), and 344 to 364 (APWQ…VLIL). A heme-binding site is contributed by His-292. Residue His-352 coordinates heme.

Belongs to the COX15/CtaA family. Type 2 subfamily. As to quaternary structure, interacts with CtaB. Requires heme b as cofactor.

Its subcellular location is the cell membrane. The catalysed reaction is Fe(II)-heme o + 2 A + H2O = Fe(II)-heme a + 2 AH2. Its pathway is porphyrin-containing compound metabolism; heme A biosynthesis; heme A from heme O: step 1/1. Functionally, catalyzes the conversion of heme O to heme A by two successive hydroxylations of the methyl group at C8. The first hydroxylation forms heme I, the second hydroxylation results in an unstable dihydroxymethyl group, which spontaneously dehydrates, resulting in the formyl group of heme A. This is Heme A synthase from Ruegeria pomeroyi (strain ATCC 700808 / DSM 15171 / DSS-3) (Silicibacter pomeroyi).